The primary structure comprises 93 residues: Class II hydrophobin 1 (93 aa).

The N-terminal stretch at 1–16 is a signal peptide; sequence MKFFAVAALFVASAMA. Disulfide bonds link Cys-24–Cys-74, Cys-35–Cys-65, Cys-36–Cys-48, and Cys-75–Cys-86.

This sequence belongs to the cerato-ulmin hydrophobin family. In terms of assembly, interacts with maize ubiquilin 1-like (UBL) protein. Homotetramer. Further self-assembles to form highly ordered films at water-air interfaces through intermolecular interactions.

It is found in the cell membrane. Aerial growth, conidiation, and dispersal of filamentous fungi in the environment rely upon a capability of their secreting small amphipathic proteins called hydrophobins (HPBs) with low sequence identity. Class I can self-assemble into an outermost layer of rodlet bundles on aerial cell surfaces, conferring cellular hydrophobicity that supports fungal growth, development and dispersal; whereas Class II form highly ordered films at water-air interfaces through intermolecular interactions but contribute nothing to the rodlet structure. Hyd1 is a class II hydrophobin that acts as an elicitor of induced systemic resistance (ISR) in plants. During interaction with the plant, binds with the maize target protein UBL in order to recruit more UBL proteins in maize roots to elicit plant defense responses, including cell death as well as brassinosteroid, jasmonate (JA) and ethylene (ET) signaling. This Trichoderma harzianum (Hypocrea lixii) protein is Class II hydrophobin 1.